Reading from the N-terminus, the 201-residue chain is MSTEAQRVDDSPSTSGGSSDGDQRESVQQEPEREQVQPKKKEGKISSKTAAKLSTSAKRIQKELAEITLDPPPNCSAGPKGDNIYEWRSTILGPPGSVYEGGVFFLDITFSPDYPFKPPKVTFRTRIYHCNINSQGVICLDILKDNWSPALTISKVLLSICSLLTDCNPADPLVGSIATQYMTNRAEHDRMARQWTKRYAT.

Residues 1–10 (MSTEAQRVDD) are compositionally biased toward basic and acidic residues. The disordered stretch occupies residues 1 to 55 (MSTEAQRVDDSPSTSGGSSDGDQRESVQQEPEREQVQPKKKEGKISSKTAAKLST). Position 2 is an N-acetylserine (Ser-2). A phosphoserine mark is found at Ser-11, Ser-15, Ser-18, and Ser-19. Basic and acidic residues predominate over residues 21-45 (GDQRESVQQEPEREQVQPKKKEGKI). Residues 46–55 (SSKTAAKLST) are compositionally biased toward low complexity. Residues 55–201 (TSAKRIQKEL…ARQWTKRYAT (147 aa)) enclose the UBC core domain. Cys-139 (glycyl thioester intermediate) is an active-site residue.

Belongs to the ubiquitin-conjugating enzyme family. In terms of processing, autoubiquitinated in vitro.

The catalysed reaction is S-ubiquitinyl-[E1 ubiquitin-activating enzyme]-L-cysteine + [E2 ubiquitin-conjugating enzyme]-L-cysteine = [E1 ubiquitin-activating enzyme]-L-cysteine + S-ubiquitinyl-[E2 ubiquitin-conjugating enzyme]-L-cysteine.. The protein operates within protein modification; protein ubiquitination. Accepts ubiquitin from the E1 complex and catalyzes its covalent attachment to other proteins. In vitro catalyzes 'Lys-11'- and 'Lys-48'-, as well as 'Lys-63'-linked polyubiquitination. Catalyzes the ISGylation of influenza A virus NS1 protein. The chain is Ubiquitin-conjugating enzyme E2 E2 from Homo sapiens (Human).